The sequence spans 626 residues: MSDPVRITNPGAESLGYDSDGHEIMAVDIYVNPPRVDVFHGTPPAWSSFGNKTIWGGNEWVDDSPTRSDIEKRDKEITAYKNTLSAQQKENENKRTEAGKRLSAAIAAREKDENTLKTLRAGNADAADITRQEFRLLQAELREYGFRTEIAGYDALRLHTESRMLFADADSLRISPREARSLIEQAEKRQKDAQNADKKAADMLAEYERRKGILDTRLSELEKNGGAALAVLDAQQARLLGQQTRNDRAISEARNKLSSVTESLKTARNALTRAEQQLTQQKNTPDGKTIVSPEKFPGRSSTNHSIVVSGDPRFAGTIKITTSAVIDNRANLNYLLTHSGLDYKRNILNDRNPVVTEDVEGDKKIYNAEVAEWDKLRQRLLDARNKITSAESAINSARNNVSARTNEQKHANDALNALLKEKENIRSQLADINQKIAEEKRKRDEINMVKDAIKLTSDFYRTIYDEFGKQASELAKELASVSQGKQIKSVDDALNAFDKFRNNLNKKYNIQDRMAISKALEAINQVHMAENFKLFSKAFGFTGKVIERYDVAVELQKAVKTDNWRPFFVKLESLAAGRAASAVTAWAFSVMLGTPVGILGFAIIMAAVSALVNDKFIEQVNKLIGI.

Over residues 276-286 the composition is skewed to polar residues; sequence QQLTQQKNTPD. Positions 276–308 are disordered; sequence QQLTQQKNTPDGKTIVSPEKFPGRSSTNHSIVV. Residues 588–612 traverse the membrane as a helical segment; that stretch reads FSVMLGTPVGILGFAIIMAAVSALV.

The protein belongs to the channel forming colicin family.

It localises to the host membrane. Functionally, this colicin is a channel-forming colicin. This class of transmembrane toxins depolarize the cytoplasmic membrane, leading to dissipation of cellular energy. In terms of biological role, colicins are polypeptide toxins produced by and active against E.coli and closely related bacteria. The protein is Colicin-Ib (cib) of Escherichia coli.